Here is a 195-residue protein sequence, read N- to C-terminus: Imidazole glycerol phosphate synthase subunit HisH 2 (195 aa).

In terms of domain architecture, Glutamine amidotransferase type-1 spans 2-195 (KIIIIDTACA…LISNFIKDIG (194 aa)). The active-site Nucleophile is the Cys-77. Active-site residues include His-175 and Glu-177.

As to quaternary structure, heterodimer of HisH and HisF.

The protein resides in the cytoplasm. The catalysed reaction is 5-[(5-phospho-1-deoxy-D-ribulos-1-ylimino)methylamino]-1-(5-phospho-beta-D-ribosyl)imidazole-4-carboxamide + L-glutamine = D-erythro-1-(imidazol-4-yl)glycerol 3-phosphate + 5-amino-1-(5-phospho-beta-D-ribosyl)imidazole-4-carboxamide + L-glutamate + H(+). It catalyses the reaction L-glutamine + H2O = L-glutamate + NH4(+). It participates in amino-acid biosynthesis; L-histidine biosynthesis; L-histidine from 5-phospho-alpha-D-ribose 1-diphosphate: step 5/9. Functionally, IGPS catalyzes the conversion of PRFAR and glutamine to IGP, AICAR and glutamate. The HisH subunit provides the glutamine amidotransferase activity that produces the ammonia necessary to HisF for the synthesis of IGP and AICAR. This Campylobacter jejuni subsp. jejuni serotype O:2 (strain ATCC 700819 / NCTC 11168) protein is Imidazole glycerol phosphate synthase subunit HisH 2 (hisH2).